A 63-amino-acid chain; its full sequence is Conotoxin Vi5.1a (63 aa).

The signal sequence occupies residues 1 to 22 (MRCVPVFIILLLLIPSAPSADA). Positions 23-50 (QPKTKDDVPLASYHDNAERTLQRLWNQR) are excised as a propeptide. Proline amide is present on proline 62.

The protein belongs to the conotoxin T superfamily. Post-translationally, contains 2 disulfide bonds that can be either 'C1-C3, C2-C4' or 'C1-C4, C2-C3', since these disulfide connectivities have been observed for conotoxins with cysteine framework V (for examples, see AC P0DQQ7 and AC P81755). As to expression, expressed by the venom duct.

It localises to the secreted. This chain is Conotoxin Vi5.1a, found in Conus virgo (Virgin cone).